Here is an 87-residue protein sequence, read N- to C-terminus: MRSITWFIVFCVFMFIALNHVKGQVKPTGCQGGQRYRGKCGTNGTKTCVKDMMLPKLFKTKRCDCQDMLGTFKGWHFCTCYSGRPGC.

The N-terminal stretch at 1–23 is a signal peptide; that stretch reads MRSITWFIVFCVFMFIALNHVKG. Intrachain disulfides connect cysteine 30–cysteine 87, cysteine 40–cysteine 65, cysteine 48–cysteine 78, and cysteine 63–cysteine 80.

This sequence belongs to the DEFL family.

Its subcellular location is the secreted. The polypeptide is Putative defensin-like protein 238 (SCRL16) (Arabidopsis thaliana (Mouse-ear cress)).